A 206-amino-acid chain; its full sequence is Ribosomal RNA large subunit methyltransferase E (206 aa).

S-adenosyl-L-methionine is bound by residues Gly-60, Trp-62, Asp-80, Asp-96, and Asp-121. The active-site Proton acceptor is Lys-161.

This sequence belongs to the class I-like SAM-binding methyltransferase superfamily. RNA methyltransferase RlmE family.

It is found in the cytoplasm. The catalysed reaction is uridine(2552) in 23S rRNA + S-adenosyl-L-methionine = 2'-O-methyluridine(2552) in 23S rRNA + S-adenosyl-L-homocysteine + H(+). Functionally, specifically methylates the uridine in position 2552 of 23S rRNA at the 2'-O position of the ribose in the fully assembled 50S ribosomal subunit. The chain is Ribosomal RNA large subunit methyltransferase E from Francisella tularensis subsp. holarctica (strain FTNF002-00 / FTA).